Here is a 131-residue protein sequence, read N- to C-terminus: Small ribosomal subunit protein uS11 (131 aa).

It belongs to the universal ribosomal protein uS11 family. Part of the 30S ribosomal subunit. Interacts with proteins S7 and S18. Binds to IF-3.

Functionally, located on the platform of the 30S subunit, it bridges several disparate RNA helices of the 16S rRNA. Forms part of the Shine-Dalgarno cleft in the 70S ribosome. The chain is Small ribosomal subunit protein uS11 from Trichodesmium erythraeum (strain IMS101).